A 62-amino-acid polypeptide reads, in one-letter code: Small ribosomal subunit protein bS21 (62 aa).

The segment at glutamate 43–tyrosine 62 is disordered. The segment covering lysine 44 to tyrosine 62 has biased composition (basic residues).

This sequence belongs to the bacterial ribosomal protein bS21 family.

This is Small ribosomal subunit protein bS21 from Trichodesmium erythraeum (strain IMS101).